Consider the following 138-residue polypeptide: Drosulfakinins (138 aa).

The signal sequence occupies residues 1–33 (MGLRSCTHFATLVMPLWALAFCFLVLVPVPAQT). Residues 34 to 73 (TSLQISKGDRRLQDLESNMGAESDQPNANLVGTSLSRFGD) constitute a propeptide that is removed on maturation. Phenylalanine 82 is modified (phenylalanine amide). Positions 86–108 (VPRPIIPIELDLLMDNDDENTKA) are excised as a propeptide. Tyrosine 114 carries the post-translational modification Sulfotyrosine. Phenylalanine 119 bears the Phenylalanine amide mark. Residue tyrosine 131 is modified to Sulfotyrosine. Residue phenylalanine 136 is modified to Phenylalanine amide.

This sequence belongs to the gastrin/cholecystokinin family.

Its subcellular location is the secreted. Functionally, drosulfakinin-0 (DSK 0) plays diverse biological roles including regulating gut muscle contraction in adults but not in larvae. In Drosophila teissieri (Fruit fly), this protein is Drosulfakinins.